Reading from the N-terminus, the 530-residue chain is Type 2 DNA topoisomerase 6 subunit B (530 aa).

Residues N42, D76, 97-98 (SK), 106-113 (GMYGLGVK), and K427 each bind ATP.

It belongs to the TOP6B family. Homodimer. Heterotetramer of two Top6A and two Top6B chains.

It catalyses the reaction ATP-dependent breakage, passage and rejoining of double-stranded DNA.. Its function is as follows. Relaxes both positive and negative superturns and exhibits a strong decatenase activity. This Saccharolobus islandicus (strain Y.N.15.51 / Yellowstone #2) (Sulfolobus islandicus) protein is Type 2 DNA topoisomerase 6 subunit B.